Here is a 467-residue protein sequence, read N- to C-terminus: Pancreatic lipase-related protein 3 (467 aa).

A signal peptide spans 1 to 17; sequence MLGIWIVAFLFFGTSRG. A disulfide bridge connects residues Cys-21 and Cys-27. The N-linked (GlcNAc...) asparagine glycan is linked to Asn-74. A disulfide bridge links Cys-107 with Cys-118. N-linked (GlcNAc...) asparagine glycosylation is present at Asn-125. The active-site Nucleophile is Ser-168. Asp-191 functions as the Charge relay system in the catalytic mechanism. Cysteines 252 and 277 form a disulfide. His-279 serves as the catalytic Charge relay system. 3 disulfide bridges follow: Cys-301/Cys-312, Cys-315/Cys-320, and Cys-451/Cys-467. The PLAT domain occupies 355–467; sequence WRHKLSVKLS…PNILQNLKPC (113 aa).

It belongs to the AB hydrolase superfamily. Lipase family. Overexpressed in hepatocellular carcinoma.

The protein localises to the secreted. It carries out the reaction a triacylglycerol + H2O = a diacylglycerol + a fatty acid + H(+). This is Pancreatic lipase-related protein 3 (PNLIPRP3) from Homo sapiens (Human).